Here is a 289-residue protein sequence, read N- to C-terminus: RING-H2 finger protein ATL30 (289 aa).

The helical transmembrane segment at 26-46 threads the bilayer; it reads VIILTVILLVVFFIGFFAIYF. The segment at 114 to 157 adopts an RING-type; atypical zinc-finger fold; it reads CAICLLEFEEEHILLRLLTTCYHVFHQECIDQWLESNKTCPVCR. A disordered region spans residues 181-206; it reads HENRDQEQTSTSNEVMLSRQSSGNNE. The segment covering 188–204 has biased composition (polar residues); that stretch reads QTSTSNEVMLSRQSSGN.

Belongs to the RING-type zinc finger family. ATL subfamily.

Its subcellular location is the membrane. The catalysed reaction is S-ubiquitinyl-[E2 ubiquitin-conjugating enzyme]-L-cysteine + [acceptor protein]-L-lysine = [E2 ubiquitin-conjugating enzyme]-L-cysteine + N(6)-ubiquitinyl-[acceptor protein]-L-lysine.. Its pathway is protein modification; protein ubiquitination. This is RING-H2 finger protein ATL30 (ATL30) from Arabidopsis thaliana (Mouse-ear cress).